Here is an 89-residue protein sequence, read N- to C-terminus: Small ribosomal subunit protein uS15 (89 aa).

Belongs to the universal ribosomal protein uS15 family. Part of the 30S ribosomal subunit. Forms a bridge to the 50S subunit in the 70S ribosome, contacting the 23S rRNA.

One of the primary rRNA binding proteins, it binds directly to 16S rRNA where it helps nucleate assembly of the platform of the 30S subunit by binding and bridging several RNA helices of the 16S rRNA. In terms of biological role, forms an intersubunit bridge (bridge B4) with the 23S rRNA of the 50S subunit in the ribosome. The polypeptide is Small ribosomal subunit protein uS15 (Shewanella baltica (strain OS185)).